Consider the following 179-residue polypeptide: Cell division protein ZapC (179 aa).

It belongs to the ZapC family. Interacts directly with FtsZ.

The protein localises to the cytoplasm. In terms of biological role, contributes to the efficiency of the cell division process by stabilizing the polymeric form of the cell division protein FtsZ. Acts by promoting interactions between FtsZ protofilaments and suppressing the GTPase activity of FtsZ. This Ferrimonas balearica (strain DSM 9799 / CCM 4581 / KCTC 23876 / PAT) protein is Cell division protein ZapC.